The sequence spans 264 residues: Hydroxyethylthiazole kinase (264 aa).

Met55 serves as a coordination point for substrate. 2 residues coordinate ATP: Arg130 and Ser176. Gly203 serves as a coordination point for substrate.

Belongs to the Thz kinase family. Requires Mg(2+) as cofactor.

It carries out the reaction 5-(2-hydroxyethyl)-4-methylthiazole + ATP = 4-methyl-5-(2-phosphooxyethyl)-thiazole + ADP + H(+). The protein operates within cofactor biosynthesis; thiamine diphosphate biosynthesis; 4-methyl-5-(2-phosphoethyl)-thiazole from 5-(2-hydroxyethyl)-4-methylthiazole: step 1/1. Catalyzes the phosphorylation of the hydroxyl group of 4-methyl-5-beta-hydroxyethylthiazole (THZ). This Leptospira borgpetersenii serovar Hardjo-bovis (strain JB197) protein is Hydroxyethylthiazole kinase.